The chain runs to 311 residues: Protein YIPF2 (311 aa).

A2 carries the N-acetylalanine modification. Over 2–120 the chain is Cytoplasmic; sequence AAADDLAFHE…LRNRPDLYGP (119 aa). The chain crosses the membrane as a helical span at residues 121 to 141; it reads FWICATLAFVLAVTGNLTLVL. Topologically, residues 142–159 are lumenal; it reads AQRRDPSIHYSPQFHKVT. Residues 160-180 form a helical membrane-spanning segment; sequence IAGITIYCYAWLVPLALWGFL. Residues 181 to 198 lie on the Cytoplasmic side of the membrane; the sequence is RWRQGTRERMGLYTFLET. The helical transmembrane segment at 199–219 threads the bilayer; it reads VCVYGYSLFVFIPTVVLWLIP. The Lumenal portion of the chain corresponds to 220 to 226; that stretch reads VQWLQWL. Residues 227–247 form a helical membrane-spanning segment; the sequence is FGALALALSAAGLVFTLWPVV. Over 248 to 252 the chain is Cytoplasmic; sequence REDTR. Residues 253-273 traverse the membrane as a helical segment; it reads LVAAALLSIVVLLHALLALGC. Topologically, residues 274–311 are lumenal; it reads KLYFFQPLPLDHVVPAPQAIPPSPNVLLPSSVQPMTTF.

The protein belongs to the YIP1 family. In terms of assembly, interacts with YIPF6; this interaction may stabilize YIPF2. May also form a ternary complex with YIPF1 and YIPF6.

The protein localises to the golgi apparatus. It localises to the cis-Golgi network membrane. It is found in the trans-Golgi network membrane. Its subcellular location is the late endosome membrane. The protein is Protein YIPF2 (Yipf2) of Rattus norvegicus (Rat).